The chain runs to 412 residues: Peptidyl-prolyl cis-trans isomerase FKBP8 (412 aa).

Positions 1 to 68 are disordered; the sequence is MASCAEPSEP…GQPPAEEAEQ (68 aa). The span at 22–50 shows a compositional bias: acidic residues; that stretch reads EDFEVLDGVEDAEGEEEEEEEEEEEDDLS. In terms of domain architecture, PPIase FKBP-type spans 120 to 204; it reads GQVVTVHLQT…CLEVTLKTAV (85 aa). Ca(2+) is bound by residues Asp149 and Asp151. The TPR 1 repeat unit spans residues 221-254; sequence ANRKRECGNAHYQRADFVLAANSYDLAIKAITSS. Glycyl lysine isopeptide (Lys-Gly) (interchain with G-Cter in ubiquitin) cross-links involve residues Lys249, Lys271, Lys273, and Lys284. TPR repeat units follow at residues 272–305 and 306–339; these read VKCL…QPDN and IKAL…EPSN. Ser296 bears the Phosphoserine mark. Glycyl lysine isopeptide (Lys-Gly) (interchain with G-Cter in ubiquitin) cross-links involve residues Lys307, Lys314, Lys334, Lys340, Lys348, Lys351, and Lys352. Residues 390 to 410 traverse the membrane as a helical segment; the sequence is WLFGATAVALGGVALSVVIAA.

As to quaternary structure, homomultimers or heteromultimers (Potential). Forms heterodimer with calmodulin. When activated by calmodulin and calcium, interacts with the BH4 domain of BCL2 and weakly with BCL2L1/BCLX isoform Bcl-X(L). Does not bind and inhibit calcineurin. Interacts with ZFYVE27; may negatively regulate ZFYVE27 phosphorylation. In terms of assembly, (Microbial infection) Interacts with hepatitis C/HCV protein NS5A. Requires Ca(2+) as cofactor. Post-translationally, ubiquitinated by PRKN during mitophagy, leading to its degradation and enhancement of mitophagy. Deubiquitinated by USP30. As to expression, widely expressed. Highest levels seen in the brain. Highly abundant in the retina.

The protein resides in the mitochondrion. It is found in the mitochondrion membrane. It catalyses the reaction [protein]-peptidylproline (omega=180) = [protein]-peptidylproline (omega=0). Functionally, constitutively inactive PPiase, which becomes active when bound to calmodulin and calcium. Seems to act as a chaperone for BCL2, targets it to the mitochondria and modulates its phosphorylation state. The BCL2/FKBP8/calmodulin/calcium complex probably interferes with the binding of BCL2 to its targets. The active form of FKBP8 may therefore play a role in the regulation of apoptosis. Involved in the inhibition of viral infection by influenza A viruses (IAV). The polypeptide is Peptidyl-prolyl cis-trans isomerase FKBP8 (FKBP8) (Homo sapiens (Human)).